Consider the following 490-residue polypeptide: RNA-binding protein P (490 aa).

A disordered region spans residues 1-112 (MGKKRKLDSK…EEEEAAERDA (112 aa)). Over residues 13 to 36 (AAARSAAARAAAAAAAAAAAAAVA) the composition is skewed to low complexity. Over residues 74-108 (GGEEEEVEEVEVEEEVEVDEDEDGEGEGEEEEEAA) the composition is skewed to acidic residues. RRM domains are found at residues 156–233 (RKIF…LASV) and 267–343 (RKIF…QKAI).

In terms of assembly, forms homodimers. Interacts with RBP-L and RBP-208. Interacts with NSF.

Its subcellular location is the nucleus. The protein resides in the cytoplasm. Functionally, RNA-binding protein that binds to a cis-localization element or zipcode, within the 5'-CDS of prolamine RNA. Binds strongly to glutelin mRNA, particularly to 3'-UTR and zipcode RNA. Recognizes and binds to glutelin zipcode RNA, which is required for proper mRNA localization to cisternal endoplasmic reticulum. Exhibits strong binding activity to a glutelin intron sequence and may participate in mRNA splicing. Required for the correct localization of glutelin and prolamine mRNA in endosperm cells during grain development. RBP-P and RBP-L form a quaternary complex with the membrane trafficking factors NSF and RAB5A. This quaternay complex carries glutelin mRNAs for active transport on endosomes to the cortical endoplasmic reticulum membrane, and enables endosome-mediated glutelin mRNA transport in endosperm cells. The protein is RNA-binding protein P of Oryza sativa subsp. japonica (Rice).